The primary structure comprises 283 residues: Urease accessory protein UreD (283 aa).

Residues 1–20 (MTQTQPVGTLRLTIDDQGPQ) form a disordered region.

Belongs to the UreD family. UreD, UreF and UreG form a complex that acts as a GTP-hydrolysis-dependent molecular chaperone, activating the urease apoprotein by helping to assemble the nickel containing metallocenter of UreC. The UreE protein probably delivers the nickel.

It is found in the cytoplasm. Functionally, required for maturation of urease via the functional incorporation of the urease nickel metallocenter. The sequence is that of Urease accessory protein UreD from Corynebacterium glutamicum (strain R).